Here is a 590-residue protein sequence, read N- to C-terminus: Type I inositol polyphosphate 5-phosphatase 1 (590 aa).

Positions 47–73 (DYSADSDDDYEDRSQEFDPISSGVTNP) are disordered. Positions 48–57 (YSADSDDDYE) are enriched in acidic residues. Phosphoserine is present on serine 60. Catalytic stretches follow at residues 445-460 (ERII…INLS) and 523-538 (GKRR…WNGK).

The protein belongs to the inositol polyphosphate 5-phosphatase family. As to expression, expressed ubiquitously.

The enzyme catalyses 1D-myo-inositol 1,4,5-trisphosphate + H2O = 1D-myo-inositol 1,4-bisphosphate + phosphate. It catalyses the reaction 1D-myo-inositol 1,3,4,5-tetrakisphosphate + H2O = 1D-myo-inositol 1,3,4-trisphosphate + phosphate. In terms of biological role, has phosphatase activity toward Ins(1,4,5)P3 and Ins(1,3,4,5)P4, but not toward Ins(1,4)P2, Ins(1)P. Seems to be involved in the abscisic acid (ABA) signaling pathway. Could also be able to hydrolyze PtdIns(4,5)P2 and PtdIns(3,4,5)P3. The chain is Type I inositol polyphosphate 5-phosphatase 1 from Arabidopsis thaliana (Mouse-ear cress).